The chain runs to 220 residues: UPF0319 protein YccT (220 aa).

The N-terminal stretch at 1 to 20 (MKTGIVTTLIALCLPVSVFA) is a signal peptide.

This sequence belongs to the UPF0319 family.

The polypeptide is UPF0319 protein YccT (Escherichia coli O139:H28 (strain E24377A / ETEC)).